Reading from the N-terminus, the 84-residue chain is Venom protein SynTx (84 aa).

The first 19 residues, 1 to 19 (TLLLTLVVVTIVCLDLGYT), serve as a signal peptide directing secretion. Intrachain disulfides connect Cys22-Cys43, Cys36-Cys61, Cys65-Cys76, and Cys77-Cys82.

Belongs to the three-finger toxin family. Short-chain subfamily. Aminergic toxin sub-subfamily. In terms of assembly, homodimer; disulfide-linked. As to expression, expressed by the venom gland.

The protein resides in the secreted. This protein shows a synergetic toxic effect in that it enhances the toxicity of other toxins. The chain is Venom protein SynTx from Dendroaspis jamesoni jamesoni (Jameson's mamba).